A 242-amino-acid chain; its full sequence is Response regulator GtcR (242 aa).

The Response regulatory domain occupies 4–117; sequence TILIADDEPE…EAVARIQAQL (114 aa). Residue Asp53 is modified to 4-aspartylphosphate. The segment at residues 133–233 is a DNA-binding region (ompR/PhoB-type); sequence TQSTTVGRLT…VRGLGYKFAS (101 aa).

Post-translationally, phosphorylated by GtcS.

In terms of biological role, member of the two-component regulatory system GtcS/GtcR which may act in the control of the transcription of the grs operon which encodes the multienzymes involved in the biosynthesis of the peptide antibiotic gramicidin S. The chain is Response regulator GtcR (gtcR) from Aneurinibacillus migulanus (Bacillus migulanus).